We begin with the raw amino-acid sequence, 1342 residues long: DNA-directed RNA polymerase subunit beta (1342 aa).

Belongs to the RNA polymerase beta chain family. The RNAP catalytic core consists of 2 alpha, 1 beta, 1 beta' and 1 omega subunit. When a sigma factor is associated with the core the holoenzyme is formed, which can initiate transcription.

The catalysed reaction is RNA(n) + a ribonucleoside 5'-triphosphate = RNA(n+1) + diphosphate. In terms of biological role, DNA-dependent RNA polymerase catalyzes the transcription of DNA into RNA using the four ribonucleoside triphosphates as substrates. The polypeptide is DNA-directed RNA polymerase subunit beta (Pseudoalteromonas atlantica (strain T6c / ATCC BAA-1087)).